Consider the following 105-residue polypeptide: TPR repeat-containing protein PA0015 (105 aa).

TPR repeat units lie at residues 17 to 50 (ALLRFGLGKGYLDAGDAERAAEHLQRCVEQDPKY) and 52 to 84 (AGWKLLGKARQAAGDLAGARQAWEQGLATAATH).

This Pseudomonas aeruginosa (strain ATCC 15692 / DSM 22644 / CIP 104116 / JCM 14847 / LMG 12228 / 1C / PRS 101 / PAO1) protein is TPR repeat-containing protein PA0015.